Consider the following 539-residue polypeptide: Phosphoenolpyruvate carboxykinase (ATP) (539 aa).

Substrate contacts are provided by arginine 64, tyrosine 206, and lysine 212. ATP-binding positions include lysine 212, histidine 231, and 247-255; that span reads GLSGTGKTT. Positions 212 and 231 each coordinate Mn(2+). Aspartate 268 contributes to the Mn(2+) binding site. Residues glutamate 296, arginine 332, 448-449, and threonine 454 each bind ATP; that span reads RI. A substrate-binding site is contributed by arginine 332.

The protein belongs to the phosphoenolpyruvate carboxykinase (ATP) family. In terms of assembly, monomer. The cofactor is Mn(2+).

It is found in the cytoplasm. It catalyses the reaction oxaloacetate + ATP = phosphoenolpyruvate + ADP + CO2. It functions in the pathway carbohydrate biosynthesis; gluconeogenesis. In terms of biological role, involved in the gluconeogenesis. Catalyzes the conversion of oxaloacetate (OAA) to phosphoenolpyruvate (PEP) through direct phosphoryl transfer between the nucleoside triphosphate and OAA. In Salmonella arizonae (strain ATCC BAA-731 / CDC346-86 / RSK2980), this protein is Phosphoenolpyruvate carboxykinase (ATP).